Reading from the N-terminus, the 78-residue chain is Large ribosomal subunit protein bL28 (78 aa).

A disordered region spans residues 1 to 26; it reads MSAYCQVTGRKPSFGKSVSHSHRRTN.

The protein belongs to the bacterial ribosomal protein bL28 family.

The polypeptide is Large ribosomal subunit protein bL28 (Corynebacterium jeikeium (strain K411)).